Consider the following 70-residue polypeptide: Small ribosomal subunit protein bS21 (70 aa).

It belongs to the bacterial ribosomal protein bS21 family.

In Helicobacter pylori (strain J99 / ATCC 700824) (Campylobacter pylori J99), this protein is Small ribosomal subunit protein bS21 (rpsU).